The chain runs to 144 residues: Ribosomal RNA large subunit methyltransferase H (144 aa).

S-adenosyl-L-methionine is bound by residues G92 and 111–116 (LSPMTF).

The protein belongs to the RNA methyltransferase RlmH family. In terms of assembly, homodimer.

The protein localises to the cytoplasm. The enzyme catalyses pseudouridine(1915) in 23S rRNA + S-adenosyl-L-methionine = N(3)-methylpseudouridine(1915) in 23S rRNA + S-adenosyl-L-homocysteine + H(+). Its function is as follows. Specifically methylates the pseudouridine at position 1915 (m3Psi1915) in 23S rRNA. This Synechococcus sp. (strain CC9311) protein is Ribosomal RNA large subunit methyltransferase H.